The following is a 329-amino-acid chain: Probable allantoicase (329 aa).

Belongs to the allantoicase family.

It catalyses the reaction allantoate + H2O = (S)-ureidoglycolate + urea. Its pathway is nitrogen metabolism; (S)-allantoin degradation; (S)-ureidoglycolate from allantoate (aminidohydrolase route): step 1/1. The protein is Probable allantoicase of Nocardia farcinica (strain IFM 10152).